The primary structure comprises 98 residues: Ferredoxin-3 (98 aa).

4Fe-4S ferredoxin-type domains lie at 18 to 47 (FVEAVNQDKCIGCGRCFKACGRNVLILQAL) and 66 to 95 (VMSIIHPEYCIGCQACARACPKNCYTHSPL). Residues Cys27, Cys30, Cys33, Cys37, Cys75, Cys78, Cys81, and Cys85 each coordinate [4Fe-4S] cluster.

In terms of assembly, homodimer. It depends on [4Fe-4S] cluster as a cofactor.

Ferredoxins are iron-sulfur proteins that transfer electrons in a wide variety of metabolic reactions. In Trichormus variabilis (strain ATCC 29413 / PCC 7937) (Anabaena variabilis), this protein is Ferredoxin-3 (fdxB).